Consider the following 335-residue polypeptide: uncharacterized protein (335 aa).

Disordered stretches follow at residues isoleucine 152–aspartate 179 and leucine 252–leucine 271. Phosphoserine occurs at positions 257 and 260. The span at serine 257 to leucine 271 shows a compositional bias: polar residues.

This is an uncharacterized protein from Schizosaccharomyces pombe (strain 972 / ATCC 24843) (Fission yeast).